A 711-amino-acid chain; its full sequence is Myb-like protein B (711 aa).

Residues 24-50 (QPQQSIQQQQQQQQQQQQQQQQQQQQQ) are compositionally biased toward low complexity. Disordered regions lie at residues 24–70 (QPQQ…SPQL) and 113–235 (NYHT…IINN). Polar residues-rich tracts occupy residues 113–139 (NYHTITNSPPHQIHSPQLTIDQHSPPT) and 148–157 (TPLSSSTGFS). 2 stretches are compositionally biased toward low complexity: residues 158-187 (NNNNNNNNNNNNNNNSNSNNNINNNNNNNI) and 198-235 (NNYPNNNNNNNNNNNNNNNNNNNNNNNNNNNNNNIINN). HTH myb-type domains are found at residues 428–490 (RESI…SPEI) and 491–542 (KKGS…SRQT). 2 DNA-binding regions (H-T-H motif) span residues 462-486 (WKKIATKLGGGKTGAQCAQHWKRVL) and 514-538 (WKNVAIEIKTRTDIQCRYQYFKAIM). Residues 540–598 (RQTEWNQLEDDILTKKIKLMTQNNEKISFQQVSKHLARAKTTKIPRTALECKSRWSQLN) enclose the Myb-like domain. A disordered region spans residues 598–640 (NSTNVNNNNNNNNNSITTSSSNTNQQQQSTMVTPTSSPLSSPI).

It is found in the nucleus. Its function is as follows. Transcriptional activator that initiates multicellular development by induction of adenylyl cyclase expression. The chain is Myb-like protein B (mybB) from Dictyostelium discoideum (Social amoeba).